The following is a 561-amino-acid chain: Urocanate hydratase (561 aa).

NAD(+) is bound by residues 52–53, Q130, 176–178, E196, R201, 242–243, 263–267, 273–274, and Y322; these read GG, GMG, NA, QTSAH, and YL. Residue C410 is part of the active site. NAD(+) is bound at residue G492.

Belongs to the urocanase family. NAD(+) serves as cofactor.

The protein resides in the cytoplasm. The enzyme catalyses 4-imidazolone-5-propanoate = trans-urocanate + H2O. The protein operates within amino-acid degradation; L-histidine degradation into L-glutamate; N-formimidoyl-L-glutamate from L-histidine: step 2/3. Its function is as follows. Catalyzes the conversion of urocanate to 4-imidazolone-5-propionate. The polypeptide is Urocanate hydratase (Salmonella newport (strain SL254)).